A 229-amino-acid polypeptide reads, in one-letter code: Serine acetyltransferase (229 aa).

It belongs to the transferase hexapeptide repeat family.

The protein resides in the cytoplasm. The catalysed reaction is L-serine + acetyl-CoA = O-acetyl-L-serine + CoA. It functions in the pathway amino-acid biosynthesis; L-cysteine biosynthesis; L-cysteine from L-serine: step 1/2. Functionally, catalyzes the acetylation of serine by acetyl-CoA to produce O-acetylserine (OAS). The polypeptide is Serine acetyltransferase (cysE) (Mycobacterium tuberculosis (strain ATCC 25618 / H37Rv)).